The following is a 1001-amino-acid chain: 2-oxoglutarate dehydrogenase E1 component (1001 aa).

The protein belongs to the alpha-ketoglutarate dehydrogenase family. As to quaternary structure, homodimer. Part of the 2-oxoglutarate dehydrogenase (OGDH) complex composed of E1 (2-oxoglutarate dehydrogenase), E2 (dihydrolipoamide succinyltransferase) and E3 (dihydrolipoamide dehydrogenase); the complex contains multiple copies of the three enzymatic components (E1, E2 and E3). It depends on thiamine diphosphate as a cofactor.

The enzyme catalyses N(6)-[(R)-lipoyl]-L-lysyl-[protein] + 2-oxoglutarate + H(+) = N(6)-[(R)-S(8)-succinyldihydrolipoyl]-L-lysyl-[protein] + CO2. Its function is as follows. E1 component of the 2-oxoglutarate dehydrogenase (OGDH) complex which catalyzes the decarboxylation of 2-oxoglutarate, the first step in the conversion of 2-oxoglutarate to succinyl-CoA and CO(2). The protein is 2-oxoglutarate dehydrogenase E1 component of Brucella anthropi (strain ATCC 49188 / DSM 6882 / CCUG 24695 / JCM 21032 / LMG 3331 / NBRC 15819 / NCTC 12168 / Alc 37) (Ochrobactrum anthropi).